The chain runs to 104 residues: MKNDITFYTRFQQDILAGTKTITIRDESEAHFMPGQRLRTGRYEDNGYFCTLEVLRVTPVTLAQLNEEHARQENMTLAELKKVIADIYPGINELYVIAFKKVEG.

An ASCH domain is found at 6–102 (TFYTRFQQDI…ELYVIAFKKV (97 aa)). The active-site Proton acceptor is K20. T23 acts as the Nucleophile in catalysis. E73 (proton donor) is an active-site residue.

This sequence belongs to the N(4)-acetylcytidine amidohydrolase family.

It carries out the reaction N(4)-acetylcytidine + H2O = cytidine + acetate + H(+). It catalyses the reaction N(4)-acetyl-2'-deoxycytidine + H2O = 2'-deoxycytidine + acetate + H(+). The catalysed reaction is N(4)-acetylcytosine + H2O = cytosine + acetate + H(+). In terms of biological role, catalyzes the hydrolysis of N(4)-acetylcytidine (ac4C). The sequence is that of N(4)-acetylcytidine amidohydrolase from Cronobacter sakazakii (strain ATCC BAA-894) (Enterobacter sakazakii).